We begin with the raw amino-acid sequence, 431 residues long: Adenylosuccinate synthetase (431 aa).

GTP-binding positions include 13–19 (GDEGKGK) and 41–43 (GHT). Catalysis depends on aspartate 14, which acts as the Proton acceptor. Mg(2+) is bound by residues aspartate 14 and glycine 41. IMP is bound by residues 14 to 17 (DEGK), 39 to 42 (NAGH), threonine 130, arginine 144, glutamine 225, threonine 240, and arginine 304. Histidine 42 (proton donor) is an active-site residue. Substrate is bound at residue 300 to 306 (ATTGRKR). Residues arginine 306, 332-334 (KLD), and 415-417 (STG) contribute to the GTP site.

This sequence belongs to the adenylosuccinate synthetase family. As to quaternary structure, homodimer. Requires Mg(2+) as cofactor.

The protein resides in the cytoplasm. It carries out the reaction IMP + L-aspartate + GTP = N(6)-(1,2-dicarboxyethyl)-AMP + GDP + phosphate + 2 H(+). Its pathway is purine metabolism; AMP biosynthesis via de novo pathway; AMP from IMP: step 1/2. Plays an important role in the de novo pathway of purine nucleotide biosynthesis. Catalyzes the first committed step in the biosynthesis of AMP from IMP. The sequence is that of Adenylosuccinate synthetase from Shewanella oneidensis (strain ATCC 700550 / JCM 31522 / CIP 106686 / LMG 19005 / NCIMB 14063 / MR-1).